The chain runs to 206 residues: Probable thymidylate kinase (206 aa).

ATP is bound at residue 10-17; that stretch reads GIDGSGKS.

The protein belongs to the thymidylate kinase family.

It carries out the reaction dTMP + ATP = dTDP + ADP. This is Probable thymidylate kinase from Methanosarcina acetivorans (strain ATCC 35395 / DSM 2834 / JCM 12185 / C2A).